The following is a 351-amino-acid chain: 3-dehydroquinate synthase (351 aa).

Residues 60-65 (DGEEYK), 94-98 (GVISD), 118-119 (TT), lysine 131, lysine 140, and 158-161 (FLKT) each bind NAD(+). Zn(2+)-binding residues include glutamate 173, histidine 239, and histidine 256.

This sequence belongs to the sugar phosphate cyclases superfamily. Dehydroquinate synthase family. Co(2+) serves as cofactor. Requires Zn(2+) as cofactor. It depends on NAD(+) as a cofactor.

It localises to the cytoplasm. It catalyses the reaction 7-phospho-2-dehydro-3-deoxy-D-arabino-heptonate = 3-dehydroquinate + phosphate. It functions in the pathway metabolic intermediate biosynthesis; chorismate biosynthesis; chorismate from D-erythrose 4-phosphate and phosphoenolpyruvate: step 2/7. Functionally, catalyzes the conversion of 3-deoxy-D-arabino-heptulosonate 7-phosphate (DAHP) to dehydroquinate (DHQ). This is 3-dehydroquinate synthase from Campylobacter jejuni subsp. doylei (strain ATCC BAA-1458 / RM4099 / 269.97).